The sequence spans 221 residues: Protein-disulfide oxidoreductase DsbI (221 aa).

Residues 27 to 47 (FLWLLMAVAMGGLIILAHSFF) traverse the membrane as a helical segment. Cys56 and Cys59 are joined by a disulfide. 2 helical membrane passes run 64–84 (FAMF…KNII) and 85–105 (LKLI…KFSV). A disulfide bridge links Cys128 with Cys154. A helical transmembrane segment spans residues 189-209 (LAFYEYGAGVPAGVWAMFCTV).

Belongs to the DsbB family. DsbI subfamily. As to quaternary structure, interacts with DsbL.

It is found in the cell inner membrane. Required for disulfide bond formation in some proteins. Part of a redox system composed of DsbI and DsbL that mediates formation of an essential disulfide bond in AssT. The chain is Protein-disulfide oxidoreductase DsbI from Lelliottia amnigena (Enterobacter amnigenus).